A 487-amino-acid polypeptide reads, in one-letter code: UDP-N-acetylmuramate--L-alanine ligase (487 aa).

124-130 (GTHGKTT) serves as a coordination point for ATP.

It belongs to the MurCDEF family.

Its subcellular location is the cytoplasm. The enzyme catalyses UDP-N-acetyl-alpha-D-muramate + L-alanine + ATP = UDP-N-acetyl-alpha-D-muramoyl-L-alanine + ADP + phosphate + H(+). The protein operates within cell wall biogenesis; peptidoglycan biosynthesis. Functionally, cell wall formation. The protein is UDP-N-acetylmuramate--L-alanine ligase of Acaryochloris marina (strain MBIC 11017).